A 193-amino-acid chain; its full sequence is Segregation and condensation protein B (193 aa).

The protein belongs to the ScpB family. As to quaternary structure, homodimer. Homodimerization may be required to stabilize the binding of ScpA to the Smc head domains. Component of a cohesin-like complex composed of ScpA, ScpB and the Smc homodimer, in which ScpA and ScpB bind to the head domain of Smc. The presence of the three proteins is required for the association of the complex with DNA.

It localises to the cytoplasm. In terms of biological role, participates in chromosomal partition during cell division. May act via the formation of a condensin-like complex containing Smc and ScpA that pull DNA away from mid-cell into both cell halves. This chain is Segregation and condensation protein B, found in Streptococcus thermophilus (strain CNRZ 1066).